The chain runs to 248 residues: 4-hydroxy-tetrahydrodipicolinate reductase (248 aa).

NAD(+)-binding positions include 9 to 14 (GAKGRV), 77 to 79 (GTT), and 104 to 107 (APNF). Residue histidine 134 is the Proton donor/acceptor of the active site. Residue histidine 135 coordinates (S)-2,3,4,5-tetrahydrodipicolinate. The Proton donor role is filled by lysine 138. Residue 144–145 (GT) coordinates (S)-2,3,4,5-tetrahydrodipicolinate.

Belongs to the DapB family.

The protein resides in the cytoplasm. It catalyses the reaction (S)-2,3,4,5-tetrahydrodipicolinate + NAD(+) + H2O = (2S,4S)-4-hydroxy-2,3,4,5-tetrahydrodipicolinate + NADH + H(+). It carries out the reaction (S)-2,3,4,5-tetrahydrodipicolinate + NADP(+) + H2O = (2S,4S)-4-hydroxy-2,3,4,5-tetrahydrodipicolinate + NADPH + H(+). It functions in the pathway amino-acid biosynthesis; L-lysine biosynthesis via DAP pathway; (S)-tetrahydrodipicolinate from L-aspartate: step 4/4. Catalyzes the conversion of 4-hydroxy-tetrahydrodipicolinate (HTPA) to tetrahydrodipicolinate. The polypeptide is 4-hydroxy-tetrahydrodipicolinate reductase (Corynebacterium aurimucosum (strain ATCC 700975 / DSM 44827 / CIP 107346 / CN-1) (Corynebacterium nigricans)).